We begin with the raw amino-acid sequence, 368 residues long: Glycoprotein UL18 (368 aa).

Residues 1–18 form the signal peptide; the sequence is MMTMWCLTLFVLWMLRVV. Residues 19–114 form an alpha-1-like region; sequence GMHVLRYGYT…EIALGYRSQS (96 aa). N-linked (GlcNAc...) asparagine; by host glycosylation is found at Asn-56, Asn-66, Asn-74, Asn-95, Asn-123, Asn-127, Asn-150, Asn-167, Asn-177, Asn-193, Asn-240, Asn-282, and Asn-291. The segment at 115 to 208 is alpha-2-like; sequence VLTWTHECNT…VIYSGFQPPV (94 aa). Residues 209–303 are alpha-3-like; that stretch reads THPVVKGGVR…VEIPISVTSP (95 aa). The helical transmembrane segment at 321 to 342 threads the bilayer; sequence YNTMTISSVLLALLLCALLFAF.

Interacts with host LILRB1.

The protein resides in the host membrane. Functionally, plays a role in the protection against host NK cell cytotoxicity by interacting with and modulating the activity of the host inhibitory leukocyte Ig-like receptor 1/LILRB1, which is expressed on monocytes, dendritic cells, as well as subsets of T and NK cells. UL18 exerts an inhibitory effect on LIR-1+ NK cells, while it stimulates LIR-1- NK cell. These modulations prevent lysis of the infected cells by NK cells. The chain is Glycoprotein UL18 (H301) from Homo sapiens (Human).